The primary structure comprises 90 residues: Antitoxin VapB35 (90 aa).

The disordered stretch occupies residues 53–90; that stretch reads GSVQPARVHGPAPRPTIPMRGGLDSGTLLERMRAEERY.

It belongs to the phD/YefM antitoxin family.

Functionally, antitoxin component of a type II toxin-antitoxin (TA) system. Neutralizes the effect of cognate toxin VapC35. The chain is Antitoxin VapB35 (vapB35) from Mycobacterium tuberculosis (strain CDC 1551 / Oshkosh).